Consider the following 362-residue polypeptide: Adenosine deaminase (362 aa).

His19 and His21 together coordinate Zn(2+). Substrate-binding residues include His21, Asp23, and Gly181. His208 is a Zn(2+) binding site. Glu211 (proton donor) is an active-site residue. Position 300 (Asp300) interacts with Zn(2+).

The protein belongs to the metallo-dependent hydrolases superfamily. Adenosine and AMP deaminases family. Adenosine deaminase subfamily. Zn(2+) is required as a cofactor.

It catalyses the reaction adenosine + H2O + H(+) = inosine + NH4(+). It carries out the reaction 2'-deoxyadenosine + H2O + H(+) = 2'-deoxyinosine + NH4(+). Functionally, catalyzes the hydrolytic deamination of adenosine and 2-deoxyadenosine. The chain is Adenosine deaminase from Mycolicibacterium gilvum (strain PYR-GCK) (Mycobacterium gilvum (strain PYR-GCK)).